The sequence spans 368 residues: Phospho-N-acetylmuramoyl-pentapeptide-transferase (368 aa).

9 consecutive transmembrane segments (helical) span residues 30–50, 72–92, 98–118, 139–159, 170–190, 201–221, 238–258, 264–286, and 345–365; these read AAAITALLISLMAGPWFIRYL, LPTMGGILIIFSIEVSVFLWA, HVWLVMLAIFWMGLIGFIDDY, ISLGLVIGLYTWFDPAFAVLL, LSIDYGIFYIPIVIFIITAVS, GLASGTTAIVVSALGAFSYLA, GGEIAVVCMAIVMACVGFLWF, EIIMGDTGSLALGSAVAVIALLI, and KIVIRFWIISILFFLTSLMTL.

Belongs to the glycosyltransferase 4 family. MraY subfamily. Mg(2+) is required as a cofactor.

The protein resides in the cell inner membrane. The catalysed reaction is UDP-N-acetyl-alpha-D-muramoyl-L-alanyl-gamma-D-glutamyl-meso-2,6-diaminopimeloyl-D-alanyl-D-alanine + di-trans,octa-cis-undecaprenyl phosphate = di-trans,octa-cis-undecaprenyl diphospho-N-acetyl-alpha-D-muramoyl-L-alanyl-D-glutamyl-meso-2,6-diaminopimeloyl-D-alanyl-D-alanine + UMP. It participates in cell wall biogenesis; peptidoglycan biosynthesis. Its function is as follows. Catalyzes the initial step of the lipid cycle reactions in the biosynthesis of the cell wall peptidoglycan: transfers peptidoglycan precursor phospho-MurNAc-pentapeptide from UDP-MurNAc-pentapeptide onto the lipid carrier undecaprenyl phosphate, yielding undecaprenyl-pyrophosphoryl-MurNAc-pentapeptide, known as lipid I. This chain is Phospho-N-acetylmuramoyl-pentapeptide-transferase, found in Chlorobium phaeobacteroides (strain DSM 266 / SMG 266 / 2430).